Here is a 232-residue protein sequence, read N- to C-terminus: Venom allergen 5 (232 aa).

A signal peptide spans 1 to 23 (MEQIKYLLIGIIFSSAISSSLQC). 3 cysteine pairs are disulfide-bonded: Cys28-Cys43, Cys54-Cys119, and Cys198-Cys215. Residues 71 to 217 (LQLHNELRAK…FYTTMVACNY (147 aa)) form the SCP domain.

It belongs to the CRISP family. Venom allergen 5-like subfamily. Expressed by the venom gland.

It is found in the secreted. The protein is Venom allergen 5 of Microctonus hyperodae (Parasitoid wasp).